Consider the following 241-residue polypeptide: 7-cyano-7-deazaguanine synthase (241 aa).

ATP is bound at residue 9–19 (LSGGLDSSTVL). The Zn(2+) site is built by C189, C197, C200, and C203.

It belongs to the QueC family. Zn(2+) serves as cofactor.

The catalysed reaction is 7-carboxy-7-deazaguanine + NH4(+) + ATP = 7-cyano-7-deazaguanine + ADP + phosphate + H2O + H(+). It participates in purine metabolism; 7-cyano-7-deazaguanine biosynthesis. Functionally, catalyzes the ATP-dependent conversion of 7-carboxy-7-deazaguanine (CDG) to 7-cyano-7-deazaguanine (preQ(0)). The chain is 7-cyano-7-deazaguanine synthase from Thermoplasma volcanium (strain ATCC 51530 / DSM 4299 / JCM 9571 / NBRC 15438 / GSS1).